The following is a 267-amino-acid chain: Distal basal body ring component protein (267 aa).

The N-terminal stretch at M1–L29 is a signal peptide.

As to quaternary structure, flaD is a subunit of the flagellar transenvelope basal body.

Its subcellular location is the periplasm. The protein localises to the bacterial flagellum basal body. Its function is as follows. FlaD might be the structural protein of the distal basal body ring P, or it is necessary for the assembly of the P ring. The polypeptide is Distal basal body ring component protein (flaD) (Caulobacter vibrioides (strain ATCC 19089 / CIP 103742 / CB 15) (Caulobacter crescentus)).